A 68-amino-acid polypeptide reads, in one-letter code: MNKALVWLITLLFLIFSATPNRVLAHPPYISPKTRAREGVWDHKIMKVRKIGVGASNSGHSPGAGGIP.

An N-terminal signal peptide occupies residues 1–25 (MNKALVWLITLLFLIFSATPNRVLA). The SCOOP motif signature appears at 50 to 64 (KIGVGASNSGHSPGA). The SxS motif essential for MIK2 binding signature appears at 56–58 (SNS).

It belongs to the serine rich endogenous peptide (SCOOP) phytocytokine family. As to quaternary structure, interacts with MIK2 (via extracellular leucine-rich repeat domain); this interaction triggers the formation of complex between MIK2 and the BAK1/SERK3 and SERK4 coreceptors, and subsequent BAK1 activation by phosphorylation.

Its subcellular location is the cell membrane. It is found in the secreted. It localises to the extracellular space. The protein resides in the apoplast. Functionally, brassicaceae-specific phytocytokine (plant endogenous peptide released into the apoplast) perceived by MIK2 in a BAK1/SERK3 and SERK4 coreceptors-dependent manner, that modulates various physiological and antimicrobial processes including growth prevention and reactive oxygen species (ROS) response regulation. The polypeptide is Serine rich endogenous peptide 22 (Arabidopsis thaliana (Mouse-ear cress)).